The sequence spans 360 residues: Photosystem II protein D1 2 (360 aa).

3 helical membrane-spanning segments follow: residues 29–46 (YIGWFGVIMIPTLLAATI), 118–133 (HFLIGIFCYMGREWEL), and 142–156 (WIPVAFSAPVAAATA). Residue H118 participates in chlorophyll a binding. Position 126 (Y126) interacts with pheophytin a. The [CaMn4O5] cluster site is built by D170 and E189. Residues 197–218 (FHMLGVAGVFGGALFAAMHGSL) form a helical membrane-spanning segment. A chlorophyll a-binding site is contributed by H198. A quinone is bound by residues H215 and 264 to 265 (SF). Residue H215 coordinates Fe cation. H272 provides a ligand contact to Fe cation. Residues 274–288 (FLAAWPVVGIWFAAL) form a helical membrane-spanning segment. [CaMn4O5] cluster contacts are provided by H332, E333, D342, and A344. A propeptide spanning residues 345 to 360 (SGELAPVAMIAPSIEA) is cleaved from the precursor.

This sequence belongs to the reaction center PufL/M/PsbA/D family. As to quaternary structure, PSII is composed of 1 copy each of membrane proteins PsbA, PsbB, PsbC, PsbD, PsbE, PsbF, PsbH, PsbI, PsbJ, PsbK, PsbL, PsbM, PsbT, PsbX, PsbY, PsbZ, Psb30/Ycf12, peripheral proteins PsbO, CyanoQ (PsbQ), PsbU, PsbV and a large number of cofactors. It forms dimeric complexes. It depends on The D1/D2 heterodimer binds P680, chlorophylls that are the primary electron donor of PSII, and subsequent electron acceptors. It shares a non-heme iron and each subunit binds pheophytin, quinone, additional chlorophylls, carotenoids and lipids. D1 provides most of the ligands for the Mn4-Ca-O5 cluster of the oxygen-evolving complex (OEC). There is also a Cl(-1) ion associated with D1 and D2, which is required for oxygen evolution. The PSII complex binds additional chlorophylls, carotenoids and specific lipids. as a cofactor. In terms of processing, tyr-161 forms a radical intermediate that is referred to as redox-active TyrZ, YZ or Y-Z. Post-translationally, C-terminally processed by CtpA; processing is essential to allow assembly of the oxygen-evolving complex and thus photosynthetic growth.

It is found in the cellular thylakoid membrane. It catalyses the reaction 2 a plastoquinone + 4 hnu + 2 H2O = 2 a plastoquinol + O2. Functionally, photosystem II (PSII) is a light-driven water:plastoquinone oxidoreductase that uses light energy to abstract electrons from H(2)O, generating O(2) and a proton gradient subsequently used for ATP formation. It consists of a core antenna complex that captures photons, and an electron transfer chain that converts photonic excitation into a charge separation. The D1/D2 (PsbA/PsbD) reaction center heterodimer binds P680, the primary electron donor of PSII as well as several subsequent electron acceptors. In Synechococcus elongatus, this protein is Photosystem II protein D1 2.